Here is a 545-residue protein sequence, read N- to C-terminus: Membrane protein insertase YidC (545 aa).

Residues 6-26 form a helical membrane-spanning segment; sequence LILFSALVLVLFLMWDAWQTD. Residues 34–59 form a disordered region; that stretch reads PPPPQPTASSGESSPVLPEAVPDAPP. 3 helical membrane-spanning segments follow: residues 357–377, 428–448, and 505–525; these read LVGN…LVFF, GGCL…WMLL, and PVMF…YWVV.

This sequence belongs to the OXA1/ALB3/YidC family. Type 1 subfamily. As to quaternary structure, interacts with the Sec translocase complex via SecD. Specifically interacts with transmembrane segments of nascent integral membrane proteins during membrane integration.

Its subcellular location is the cell inner membrane. Functionally, required for the insertion and/or proper folding and/or complex formation of integral membrane proteins into the membrane. Involved in integration of membrane proteins that insert both dependently and independently of the Sec translocase complex, as well as at least some lipoproteins. Aids folding of multispanning membrane proteins. The sequence is that of Membrane protein insertase YidC from Nitrosococcus oceani (strain ATCC 19707 / BCRC 17464 / JCM 30415 / NCIMB 11848 / C-107).